The following is a 141-amino-acid chain: Putative pre-16S rRNA nuclease (141 aa).

It belongs to the YqgF nuclease family.

The protein resides in the cytoplasm. In terms of biological role, could be a nuclease involved in processing of the 5'-end of pre-16S rRNA. The chain is Putative pre-16S rRNA nuclease from Roseiflexus sp. (strain RS-1).